Reading from the N-terminus, the 425-residue chain is D-amino acid dehydrogenase 2 (425 aa).

FAD is bound at residue Ile-3–Tyr-17.

Belongs to the DadA oxidoreductase family. FAD is required as a cofactor.

The enzyme catalyses a D-alpha-amino acid + A + H2O = a 2-oxocarboxylate + AH2 + NH4(+). In terms of biological role, oxidative deamination of D-amino acids. The polypeptide is D-amino acid dehydrogenase 2 (dadA2) (Ralstonia nicotianae (strain ATCC BAA-1114 / GMI1000) (Ralstonia solanacearum)).